The following is a 235-amino-acid chain: uncharacterized protein (235 aa).

2 disordered regions span residues 1 to 36 and 213 to 235; these read MGML…GRGS and VKTR…ILEQ.

This is an uncharacterized protein from Homo sapiens (Human).